The primary structure comprises 134 residues: uncharacterized protein (134 aa).

A run of 3 helical transmembrane segments spans residues 26 to 46 (VAVF…GNIG), 55 to 75 (LLKF…QIIV), and 101 to 121 (YAPM…GLIL).

It is found in the membrane. This is an uncharacterized protein from Dictyostelium discoideum (Social amoeba).